A 38-amino-acid polypeptide reads, in one-letter code: Large ribosomal subunit protein bL36 (38 aa).

The protein belongs to the bacterial ribosomal protein bL36 family.

The protein is Large ribosomal subunit protein bL36 of Stutzerimonas stutzeri (strain A1501) (Pseudomonas stutzeri).